We begin with the raw amino-acid sequence, 294 residues long: MPFIKAVKSSPYFSRYQTKYRRRREGKTDYYARKRLIAQAKNKYNAPKYRLVVRFSNRFVTCQIVSSRVNGDYVLAHAHSSELPRYGIKWGLANWTAAYATGLLVARRALAKVGLADKYEGVTEPEGEFELTEAIEDGPRPFKVFLDVGLKRTSTGSRVFGAMKGASDGGLFIPHSPNRFPGFDIETEELDDETLRKYIYGGHVAEYMEMLIDDDEERYQKQFSGLIADGIESDQLEDIYAEAYAKIREDPSFQKSGKDAAAFKAESLKYTQRKLTAEERKERFNAKVIEAGRA.

This sequence belongs to the universal ribosomal protein uL18 family. In terms of assembly, component of the large ribosomal subunit (LSU). Mature yeast ribosomes consist of a small (40S) and a large (60S) subunit. The 40S small subunit contains 1 molecule of ribosomal RNA (18S rRNA) and 33 different proteins (encoded by 57 genes). The large 60S subunit contains 3 rRNA molecules (25S, 5.8S and 5S rRNA) and 46 different proteins (encoded by 81 genes). Component of a hexameric 5S RNP precursor complex, composed of 5S RNA, rrs1, rpf2, rpl5a/rpl5b, rpl11a/rpl11b and syo1; this complex acts as a precursor for ribosome assembly. rpl5a/rpl5b/uL18 forms a heterotrimeric complex with syo1 and rpl11a/rpl11b/uL5. Interaction of this complex with KAP104 allows the nuclear import of the heterotrimer.

It is found in the cytoplasm. The protein localises to the nucleus. Its function is as follows. Component of the ribosome, a large ribonucleoprotein complex responsible for the synthesis of proteins in the cell. The small ribosomal subunit (SSU) binds messenger RNAs (mRNAs) and translates the encoded message by selecting cognate aminoacyl-transfer RNA (tRNA) molecules. The large subunit (LSU) contains the ribosomal catalytic site termed the peptidyl transferase center (PTC), which catalyzes the formation of peptide bonds, thereby polymerizing the amino acids delivered by tRNAs into a polypeptide chain. The nascent polypeptides leave the ribosome through a tunnel in the LSU and interact with protein factors that function in enzymatic processing, targeting, and the membrane insertion of nascent chains at the exit of the ribosomal tunnel. The protein is Large ribosomal subunit protein uL18B (rpl502) of Schizosaccharomyces pombe (strain 972 / ATCC 24843) (Fission yeast).